The primary structure comprises 160 residues: Eukaryotic translation initiation factor 5A-1/2 (160 aa).

The span at 1–12 (MSDEEHHFESKA) shows a compositional bias: basic and acidic residues. The disordered stretch occupies residues 1–21 (MSDEEHHFESKADAGASKTYP). At lysine 52 the chain carries Hypusine.

It belongs to the eIF-5A family. Post-translationally, lys-52 undergoes hypusination, a unique post-translational modification that consists in the addition of a butylamino group from spermidine to lysine side chain, leading to the formation of the unusual amino acid hypusine. eIF-5As are the only known proteins to undergo this modification, which is essential for their function.

Functionally, translation factor that promotes translation elongation and termination, particularly upon ribosome stalling at specific amino acid sequence contexts. Binds between the exit (E) and peptidyl (P) site of the ribosome and promotes rescue of stalled ribosome: specifically required for efficient translation of polyproline-containing peptides as well as other motifs that stall the ribosome. Acts as a ribosome quality control (RQC) cofactor by joining the RQC complex to facilitate peptidyl transfer during CAT tailing step. The sequence is that of Eukaryotic translation initiation factor 5A-1/2 (EIF5A1) from Solanum tuberosum (Potato).